Here is a 273-residue protein sequence, read N- to C-terminus: Rhamnulose-1-phosphate aldolase (273 aa).

Residue Glu-117 is part of the active site. Zn(2+) is bound by residues His-140, His-142, and His-211.

It belongs to the aldolase class II family. RhaD subfamily. Zn(2+) is required as a cofactor.

It localises to the cytoplasm. It catalyses the reaction L-rhamnulose 1-phosphate = (S)-lactaldehyde + dihydroxyacetone phosphate. It functions in the pathway carbohydrate degradation; L-rhamnose degradation; glycerone phosphate from L-rhamnose: step 3/3. Catalyzes the reversible cleavage of L-rhamnulose-1-phosphate to dihydroxyacetone phosphate (DHAP) and L-lactaldehyde. This is Rhamnulose-1-phosphate aldolase from Listeria innocua serovar 6a (strain ATCC BAA-680 / CLIP 11262).